The following is a 378-amino-acid chain: D-alanine--D-alanine ligase (378 aa).

The 226-residue stretch at 149–374 (KVLLAAAGIP…YTDLITKLIE (226 aa)) folds into the ATP-grasp domain. An ATP-binding site is contributed by 189 to 247 (EAGLQYPLFVKPSRAGSSFGVTKVEHEGDAAELAAAVYEASRHDWRILVEQGIDAREIE). Mg(2+)-binding residues include Asp-328, Glu-341, and Asn-343.

It belongs to the D-alanine--D-alanine ligase family. Requires Mg(2+) as cofactor. It depends on Mn(2+) as a cofactor.

It localises to the cytoplasm. It carries out the reaction 2 D-alanine + ATP = D-alanyl-D-alanine + ADP + phosphate + H(+). It participates in cell wall biogenesis; peptidoglycan biosynthesis. Functionally, cell wall formation. The chain is D-alanine--D-alanine ligase from Bifidobacterium adolescentis (strain ATCC 15703 / DSM 20083 / NCTC 11814 / E194a).